The primary structure comprises 93 residues: Acylphosphatase (93 aa).

Positions 7-93 (RAHVFVSGTV…EGIDGFHIRR (87 aa)) constitute an Acylphosphatase-like domain. Catalysis depends on residues R22 and N40.

Belongs to the acylphosphatase family.

It carries out the reaction an acyl phosphate + H2O = a carboxylate + phosphate + H(+). The protein is Acylphosphatase (acyP) of Haloquadratum walsbyi (strain DSM 16790 / HBSQ001).